The following is a 263-amino-acid chain: Palmitoyltransferase ZDHHC21 (263 aa).

At 1 to 4 (MKMR) the chain is on the cytoplasmic side. The helical transmembrane segment at 5–25 (LHFVVDPMGWFCMSMVFFVWI) threads the bilayer. Residues 26–44 (YNSFLIPKLVLLPHYAEGH) are Extracellular-facing. Residues 45–65 (ITAEPVICYYLASLLCFSALF) traverse the membrane as a helical segment. The Cytoplasmic portion of the chain corresponds to 66–131 (RASTTDPGKL…WINNCVGEDN (66 aa)). A DHHC domain is found at 90–140 (ELCNKCNMMRPKRSHHCSRCGHCVRRMDHHCPWINNCVGEDNHWLFLQLCF). Cysteine 120 (S-palmitoyl cysteine intermediate) is an active-site residue. A helical membrane pass occupies residues 132–152 (HWLFLQLCFYTQVLSFYTLVL). The Extracellular portion of the chain corresponds to 153 to 181 (DFCQYYYFLPLSSVDQADFAVHHELALLR). The helical transmembrane segment at 182-202 (VSCFMGLIMFGGISSLFYTQV) threads the bilayer. At 203–263 (KGILTDTTTI…KLNLTIRSHV (61 aa)) the chain is on the cytoplasmic side.

The protein belongs to the DHHC palmitoyltransferase family.

It localises to the golgi apparatus membrane. It is found in the golgi apparatus. The protein localises to the cis-Golgi network membrane. Its subcellular location is the cell membrane. The catalysed reaction is L-cysteinyl-[protein] + hexadecanoyl-CoA = S-hexadecanoyl-L-cysteinyl-[protein] + CoA. Functionally, palmitoyltransferase that catalyzes the addition of palmitate onto various protein substrates. The polypeptide is Palmitoyltransferase ZDHHC21 (Danio rerio (Zebrafish)).